The following is a 325-amino-acid chain: Protease HtpX homolog 2 (325 aa).

A run of 2 helical transmembrane segments spans residues 10-30 (LNMA…ALAV) and 41-61 (VGLI…QWLF). His147 is a binding site for Zn(2+). Glu148 is an active-site residue. Position 151 (His151) interacts with Zn(2+). Helical transmembrane passes span 159–179 (LLMA…WLFW) and 196–216 (LVFL…LLVL). Glu223 provides a ligand contact to Zn(2+).

This sequence belongs to the peptidase M48B family. Requires Zn(2+) as cofactor.

The protein resides in the cell membrane. This is Protease HtpX homolog 2 from Saccharolobus solfataricus (strain ATCC 35092 / DSM 1617 / JCM 11322 / P2) (Sulfolobus solfataricus).